We begin with the raw amino-acid sequence, 185 residues long: GTP cyclohydrolase 1 (185 aa).

The Zn(2+) site is built by Cys76, His79, and Cys147.

It belongs to the GTP cyclohydrolase I family. Toroid-shaped homodecamer, composed of two pentamers of five dimers.

The catalysed reaction is GTP + H2O = 7,8-dihydroneopterin 3'-triphosphate + formate + H(+). It participates in cofactor biosynthesis; 7,8-dihydroneopterin triphosphate biosynthesis; 7,8-dihydroneopterin triphosphate from GTP: step 1/1. The polypeptide is GTP cyclohydrolase 1 (Clostridium perfringens (strain 13 / Type A)).